A 1079-amino-acid chain; its full sequence is MLRAVLQANKNGVPLHKLQAEYKSVTGEPIPFKDMGFPALDAYLKSIPSVVRIEVSRVGEVTCYAVACKETARIAELVAHQRSSKKKGGHQVNCQMRLKSTAPVSHFGKPKITLRQPGFTPPQEMMIRKPVPTPPWGKGNYFGPRTFEYSPQPIPQLFGVAPMQRHLPNMNRPERKVTLPPRFQREVKSPLLPTPITDSNANHTQSYKRVVIGSGQSDLPVIQNNLKELLNKHSNGLWLSKLPQLYKETYKQDLGGEVLKQVPSWTHICTVQKLVSSGHTEIVIYATTRKQQPSTKNIQNRSNDQAKPNVPVVLSTPSSPPPLQISGSIPKDELKEKISTILTKYSNGLWYHALPKVFEDMFKQKLPIEAFNLDSLTDICTVDLISEEPFKAILYGKSAERAVQNSNPSVNNNIPQKLHDREPPLCSEEPDMTMAPPPLVIPSEASPSVLVVELNSTNDVVIRYIGRDYSAAQERMEDELKDFCSKSSTAQVRPLRVGQLVAAKAEEDAWLRAQISAIEDKKIKVCYVDYGFSETVDITKVCKLGKPFYTLPFQATKCRLAGLEAFCDDSVIIKALEAKACGKILAVEILHKSEKPLVVLYDTSGDDDININAACLKELYDRSLSLQLKANLSFSNVTVTNVCSDGTLFCQVPSKGLAKLYETLQKVDGEFQFQQVTSHLYVSLPFCGKICLYHYKGKWARVEITNVHSSRALDVHFLDSGTIASVKVSELKEIPPPLLRDLISIPPQALKCCLADLPLNIGMWTPDAVLWLRNTVLNCPECSIKVVKIDEAMNMVHIYLFTSNNFPDLERSINRRITNEELLKQKQKDVFLNMSVSSLEKGRGGGGAPASQLFPSGPCISPTSVAKKPDMQQSSPVPSFNMPPALPLPRPGEHMDVFVSVACHPGHFVCQPWQELHKLELVMDEMRLHYSTTEEKPIALEKNKLYAAKIENNWYRVLVKGILTNGLVSVYELDHGRHELVSCRKVQPLIEKFMHLPFQAITSQLAGINCEQWSEETSIVFRNHVEKKPLVALVQTIHESTHPWERRVVAYIVDTTLPDTDIWIHELMTEYLAQFSKPE.

In terms of domain architecture, HTH OST-type 1 spans Met1–Lys69. Positions Lys109–Pro132 are disordered. HTH OST-type domains lie at Asp218 to Thr288 and Pro330 to Ser398. Tudor domains lie at Pro494–Leu551 and Leu684–Asp741.

The protein belongs to the TDRD7 family.

Its subcellular location is the cytoplasm. In terms of biological role, component of specific cytoplasmic RNA granules involved in post-transcriptional regulation of specific genes: probably acts by binding to specific mRNAs and regulating their translation. Probably required during spermatogenesis. The chain is Tudor domain-containing protein 7 (tdrd7) from Xenopus laevis (African clawed frog).